Reading from the N-terminus, the 445-residue chain is Probable glycine dehydrogenase (decarboxylating) subunit 1 (445 aa).

Belongs to the GcvP family. N-terminal subunit subfamily. The glycine cleavage system is composed of four proteins: P, T, L and H. In this organism, the P 'protein' is a heterodimer of two subunits.

It catalyses the reaction N(6)-[(R)-lipoyl]-L-lysyl-[glycine-cleavage complex H protein] + glycine + H(+) = N(6)-[(R)-S(8)-aminomethyldihydrolipoyl]-L-lysyl-[glycine-cleavage complex H protein] + CO2. Its function is as follows. The glycine cleavage system catalyzes the degradation of glycine. The P protein binds the alpha-amino group of glycine through its pyridoxal phosphate cofactor; CO(2) is released and the remaining methylamine moiety is then transferred to the lipoamide cofactor of the H protein. The chain is Probable glycine dehydrogenase (decarboxylating) subunit 1 from Anaeromyxobacter sp. (strain Fw109-5).